The chain runs to 735 residues: Phosphoribosylformylglycinamidine synthase subunit PurL (735 aa).

H44 is a catalytic residue. Y47 and K86 together coordinate ATP. E88 is a Mg(2+) binding site. Residues 89–92 and R111 contribute to the substrate site; that span reads SHNH. Residue H90 is the Proton acceptor of the active site. A Mg(2+)-binding site is contributed by D112. Q240 serves as a coordination point for substrate. Residue D268 coordinates Mg(2+). 312 to 314 is a substrate binding site; it reads ESQ. Residues D496 and G533 each coordinate ATP. N534 is a binding site for Mg(2+). A substrate-binding site is contributed by S536.

It belongs to the FGAMS family. In terms of assembly, monomer. Part of the FGAM synthase complex composed of 1 PurL, 1 PurQ and 2 PurS subunits.

It localises to the cytoplasm. The catalysed reaction is N(2)-formyl-N(1)-(5-phospho-beta-D-ribosyl)glycinamide + L-glutamine + ATP + H2O = 2-formamido-N(1)-(5-O-phospho-beta-D-ribosyl)acetamidine + L-glutamate + ADP + phosphate + H(+). The protein operates within purine metabolism; IMP biosynthesis via de novo pathway; 5-amino-1-(5-phospho-D-ribosyl)imidazole from N(2)-formyl-N(1)-(5-phospho-D-ribosyl)glycinamide: step 1/2. Part of the phosphoribosylformylglycinamidine synthase complex involved in the purines biosynthetic pathway. Catalyzes the ATP-dependent conversion of formylglycinamide ribonucleotide (FGAR) and glutamine to yield formylglycinamidine ribonucleotide (FGAM) and glutamate. The FGAM synthase complex is composed of three subunits. PurQ produces an ammonia molecule by converting glutamine to glutamate. PurL transfers the ammonia molecule to FGAR to form FGAM in an ATP-dependent manner. PurS interacts with PurQ and PurL and is thought to assist in the transfer of the ammonia molecule from PurQ to PurL. The chain is Phosphoribosylformylglycinamidine synthase subunit PurL from Nitratiruptor sp. (strain SB155-2).